Reading from the N-terminus, the 322-residue chain is MASMAAAIAASRSAVMSGNRPLDDRERKRFTYFSSLSPMARKIMQDKEKIREKYGPEWARLPPAQQDEIIDRCLVGPRAPAAAADAGDVRDPARFPGLRGPTGQKLVRFGDEDITWQDEHSAPFSWETRSQMEFSISSLSIQEPSAATVTSDARSLAKAPQGTQGSKPAQSSRSSSLDALGPARKEEEAPFWKINAERSREGPEAEFQSLTPSQIKSMEKGEKVLPACYRQEPTTKDREAKPVPQEQQTLPSVSAEQEVPQPVQAPASLLPKATPTESPEKPPPPAVQRDEDDDALFSEPALAQISSSNVLLKTGFDFLDNW.

The span at 1–17 (MASMAAAIAASRSAVMS) shows a compositional bias: low complexity. The segment at 1 to 22 (MASMAAAIAASRSAVMSGNRPL) is disordered. Position 2 is an N-acetylalanine (Ala-2). Residue Ser-37 is modified to Phosphoserine. The disordered stretch occupies residues 81 to 104 (AAAADAGDVRDPARFPGLRGPTGQ). Position 130 is a phosphoserine (Ser-130). Polar residues-rich tracts occupy residues 142-153 (QEPSAATVTSDA) and 161-177 (QGTQ…SSSL). The interval 142 to 301 (QEPSAATVTS…DDDALFSEPA (160 aa)) is disordered. Ser-176 carries the phosphoserine modification. Over residues 183–203 (ARKEEEAPFWKINAERSREGP) the composition is skewed to basic and acidic residues. Polar residues predominate over residues 245–255 (QEQQTLPSVSA).

Its subcellular location is the cytoplasm. This is an uncharacterized protein from Mus musculus (Mouse).